The primary structure comprises 89 residues: Acylphosphatase (89 aa).

Residues 3–89 form the Acylphosphatase-like domain; it reads RFTARVAGLV…QSDLTDFRRK (87 aa). Residues Arg-18 and Asn-36 contribute to the active site.

The protein belongs to the acylphosphatase family.

It catalyses the reaction an acyl phosphate + H2O = a carboxylate + phosphate + H(+). The polypeptide is Acylphosphatase (acyP) (Frankia casuarinae (strain DSM 45818 / CECT 9043 / HFP020203 / CcI3)).